A 261-amino-acid chain; its full sequence is Cytochrome c oxidase subunit 3 (261 aa).

Residues 1-15 are Mitochondrial matrix-facing; the sequence is MTHQTHAYHMVDPSP. The helical transmembrane segment at 16 to 34 threads the bilayer; that stretch reads WPLTGALSALLMTSGLTMW. At 35–40 the chain is on the mitochondrial intermembrane side; sequence FHYHSV. Residues 41–66 form a helical membrane-spanning segment; the sequence is TLLLLGLTTNILTMFQWWRDVVREGT. Over 67–72 the chain is Mitochondrial matrix; it reads FQGHHT. The helical transmembrane segment at 73–105 threads the bilayer; sequence PVVQESLRYGMILFITSEVLFFTGFFWAFYHSS. Over 106–128 the chain is Mitochondrial intermembrane; that stretch reads LAPTPELGSYWPPVGVYPLNPLE. The helical transmembrane segment at 129 to 152 threads the bilayer; that stretch reads VPLLNTSVLLASGVTITWAHHSLM. At 153-155 the chain is on the mitochondrial matrix side; it reads EGN. Residues 156 to 183 traverse the membrane as a helical segment; it reads RKNMLQALLITILLGVYFTLLQMFEYYE. At 184–190 the chain is on the mitochondrial intermembrane side; that stretch reads ASFTISD. Residues 191 to 223 traverse the membrane as a helical segment; that stretch reads GIYGSTFFVTTGFHGLHVIIGSTFLLTCFIRQL. Residues 224-232 are Mitochondrial matrix-facing; it reads KFHFTSNHH. Residues 233-256 traverse the membrane as a helical segment; it reads FGFEAAAWYWHFVDVVWLFLYLSI. At 257 to 261 the chain is on the mitochondrial intermembrane side; it reads YWWGS.

It belongs to the cytochrome c oxidase subunit 3 family. Component of the cytochrome c oxidase (complex IV, CIV), a multisubunit enzyme composed of 14 subunits. The complex is composed of a catalytic core of 3 subunits MT-CO1, MT-CO2 and MT-CO3, encoded in the mitochondrial DNA, and 11 supernumerary subunits COX4I, COX5A, COX5B, COX6A, COX6B, COX6C, COX7A, COX7B, COX7C, COX8 and NDUFA4, which are encoded in the nuclear genome. The complex exists as a monomer or a dimer and forms supercomplexes (SCs) in the inner mitochondrial membrane with NADH-ubiquinone oxidoreductase (complex I, CI) and ubiquinol-cytochrome c oxidoreductase (cytochrome b-c1 complex, complex III, CIII), resulting in different assemblies (supercomplex SCI(1)III(2)IV(1) and megacomplex MCI(2)III(2)IV(2)).

The protein localises to the mitochondrion inner membrane. It catalyses the reaction 4 Fe(II)-[cytochrome c] + O2 + 8 H(+)(in) = 4 Fe(III)-[cytochrome c] + 2 H2O + 4 H(+)(out). Its function is as follows. Component of the cytochrome c oxidase, the last enzyme in the mitochondrial electron transport chain which drives oxidative phosphorylation. The respiratory chain contains 3 multisubunit complexes succinate dehydrogenase (complex II, CII), ubiquinol-cytochrome c oxidoreductase (cytochrome b-c1 complex, complex III, CIII) and cytochrome c oxidase (complex IV, CIV), that cooperate to transfer electrons derived from NADH and succinate to molecular oxygen, creating an electrochemical gradient over the inner membrane that drives transmembrane transport and the ATP synthase. Cytochrome c oxidase is the component of the respiratory chain that catalyzes the reduction of oxygen to water. Electrons originating from reduced cytochrome c in the intermembrane space (IMS) are transferred via the dinuclear copper A center (CU(A)) of subunit 2 and heme A of subunit 1 to the active site in subunit 1, a binuclear center (BNC) formed by heme A3 and copper B (CU(B)). The BNC reduces molecular oxygen to 2 water molecules using 4 electrons from cytochrome c in the IMS and 4 protons from the mitochondrial matrix. The polypeptide is Cytochrome c oxidase subunit 3 (MT-CO3) (Loxodonta africana (African elephant)).